A 76-amino-acid chain; its full sequence is DNA polymerase III subunit theta (76 aa).

In terms of assembly, the DNA polymerase holoenzyme is a complex that contains 10 different types of subunits. These subunits are organized into 3 functionally essential subassemblies: the pol III core, the beta sliding clamp processivity factor and the clamp-loading complex. The pol III core (subunits alpha,epsilon and theta) contains the polymerase and the 3'-5' exonuclease proofreading activities. The polymerase is tethered to the template via the sliding clamp processivity factor. The clamp-loading complex assembles the beta processivity factor onto the primer template and plays a central role in the organization and communication at the replication fork. This complex contains delta, delta', psi and chi, and copies of either or both of two different DnaX proteins, gamma and tau. The composition of the holoenzyme is, therefore: (alpha,epsilon,theta)[2]-(gamma/tau)[3]-delta,delta', psi,chi-beta[4].

It carries out the reaction DNA(n) + a 2'-deoxyribonucleoside 5'-triphosphate = DNA(n+1) + diphosphate. Its function is as follows. DNA polymerase III is a complex, multichain enzyme responsible for most of the replicative synthesis in bacteria. This DNA polymerase also exhibits 3' to 5' exonuclease activity. In terms of biological role, the exact function of the theta subunit is unknown. This is DNA polymerase III subunit theta (holE) from Escherichia coli O157:H7.